Consider the following 138-residue polypeptide: Putative nickel-responsive regulator (138 aa).

His78, His89, His91, and Cys97 together coordinate Ni(2+).

Belongs to the transcriptional regulatory CopG/NikR family. Requires Ni(2+) as cofactor.

In terms of biological role, transcriptional regulator. This is Putative nickel-responsive regulator from Desulfovibrio desulfuricans (strain ATCC 27774 / DSM 6949 / MB).